The primary structure comprises 102 residues: Thioredoxin (102 aa).

The region spanning 2–102 is the Thioredoxin domain; the sequence is VTEIRSLKQL…KTKIIDLFNN (101 aa). Cys30 and Cys33 are disulfide-bonded.

Belongs to the thioredoxin family.

Participates in various redox reactions through the reversible oxidation of its active center dithiol to a disulfide and catalyzes dithiol-disulfide exchange reactions. This is Thioredoxin (trxA) from Mycoplasma genitalium (strain ATCC 33530 / DSM 19775 / NCTC 10195 / G37) (Mycoplasmoides genitalium).